Reading from the N-terminus, the 461-residue chain is Coronin-1A (461 aa).

Position 2 is an N-acetylserine (Ser-2). A Phosphoserine; by PKC modification is found at Ser-2. 7 WD repeats span residues 13–63 (HVFG…LVLP), 73–110 (NAPTVCGHTAPVLDIAWCPHNDNVIASGSEDCTVMVWE), 123–160 (PVVTLEGHTKRVGIVAWHTTAQNVLLSAGCDNVIMVWD), 164–204 (GAAM…RIIE), 207–251 (KGTV…ALWD), 258–296 (PLSLQELDTSSGVLLPFFDPDTNIVYLCGKGDSSIRYFE), and 302–349 (PFLH…EPIA). Positions 403–418 (ELRVNRGLDTGRRRAA) are enriched in basic and acidic residues. Residues 403 to 432 (ELRVNRGLDTGRRRAAPEASGTPSSDAVSR) form a disordered region. The residue at position 412 (Thr-412) is a Phosphothreonine; by PKC. Ser-422 is modified (phosphoserine). The stretch at 424–460 (TPSSDAVSRLEEEMRKLQATVQELQKRLDRLEETVQA) forms a coiled coil. N6-acetyllysine is present on Lys-449.

Belongs to the WD repeat coronin family. As to quaternary structure, binds actin. Post-translationally, phosphorylation at Thr-412 by PKC strongly down-regulates the association with actin. Polyubiquitinated by RNF128 with 'Lys-48'-linked chains, leading to proteasomal degradation. In terms of tissue distribution, expressed in brain, thymus, spleen, bone marrow and lymph node. Low in lung and gut.

It localises to the cytoplasm. It is found in the cytoskeleton. The protein localises to the cell cortex. The protein resides in the cytoplasmic vesicle. Its subcellular location is the phagosome membrane. In terms of biological role, may be a crucial component of the cytoskeleton of highly motile cells, functioning both in the invagination of large pieces of plasma membrane, as well as in forming protrusions of the plasma membrane involved in cell locomotion. In mycobacteria-infected cells, its retention on the phagosomal membrane prevents fusion between phagosomes and lysosomes. This Homo sapiens (Human) protein is Coronin-1A (CORO1A).